The following is a 96-amino-acid chain: Large ribosomal subunit protein bL28 (96 aa).

It belongs to the bacterial ribosomal protein bL28 family.

The protein is Large ribosomal subunit protein bL28 of Methylocella silvestris (strain DSM 15510 / CIP 108128 / LMG 27833 / NCIMB 13906 / BL2).